The following is a 745-amino-acid chain: Junction plakoglobin (745 aa).

N-acetylmethionine is present on M1. The O-linked (GlcNAc) threonine glycan is linked to T14. Residues S99 and S125 each carry the phosphoserine modification. 12 ARM repeats span residues 132 to 171, 172 to 215, 216 to 255, 258 to 297, 298 to 341, 342 to 381, 383 to 420, 423 to 464, 470 to 510, 512 to 551, 574 to 613, and 615 to 661; these read NYQD…QLSK, KEAS…LSHH, REGL…NLLL, EGAK…LLAY, GNQE…LSVC, PSNK…NLSD, ATKQ…NLTC, SKNK…HLTS, EMAQ…NLAL, PANH…QPYT, PMNR…ELAQ, and KEAA…PDYR. The interaction with DSC1 and DSG1 stretch occupies residues 132–297; sequence NYQDDAELAT…TTDCLQLLAY (166 aa). Phosphoserine is present on S182. The tract at residues 574–661 is interaction with DSC1; the sequence is PMNRMEIFRL…ISEDKNPDYR (88 aa). Phosphoserine occurs at positions 665 and 730.

It belongs to the beta-catenin family. In terms of assembly, homodimer. Component of an E-cadherin/catenin adhesion complex composed of at least E-cadherin/CDH1 and gamma-catenin/JUP, and possibly alpha-catenin/CTNNA1; the complex is located to adherens junctions. The stable association of CTNNA1 is controversial as CTNNA1 was shown not to bind to F-actin when assembled in the complex. Interacts with MUC1. Interacts with CAV1. Interacts with PTPRJ. Interacts with DSG1. Interacts with DSC1 and DSC2. Interacts with PKP2. Interacts with PKP3 (via N-terminus); the interaction is required for PKP3 localization to desmosome cell-cell junctions. Interacts with DSG4. May be phosphorylated by FER.

It is found in the cell junction. It localises to the adherens junction. The protein localises to the desmosome. The protein resides in the cytoplasm. Its subcellular location is the cytoskeleton. It is found in the cell membrane. It localises to the nucleus. Its function is as follows. Common junctional plaque protein. The membrane-associated plaques are architectural elements in an important strategic position to influence the arrangement and function of both the cytoskeleton and the cells within the tissue. The presence of plakoglobin in both the desmosomes and in the intermediate junctions suggests that it plays a central role in the structure and function of submembranous plaques. Acts as a substrate for VE-PTP and is required by it to stimulate VE-cadherin function in endothelial cells. Can replace beta-catenin in E-cadherin/catenin adhesion complexes which are proposed to couple cadherins to the actin cytoskeleton. This Sus scrofa (Pig) protein is Junction plakoglobin.